A 515-amino-acid polypeptide reads, in one-letter code: 1-pyrroline-5-carboxylate dehydrogenase (515 aa).

Residues glutamate 286 and cysteine 320 contribute to the active site.

This sequence belongs to the aldehyde dehydrogenase family. RocA subfamily.

The enzyme catalyses L-glutamate 5-semialdehyde + NAD(+) + H2O = L-glutamate + NADH + 2 H(+). Its pathway is amino-acid degradation; L-proline degradation into L-glutamate; L-glutamate from L-proline: step 2/2. In Bacillus subtilis (strain 168), this protein is 1-pyrroline-5-carboxylate dehydrogenase (rocA).